Consider the following 465-residue polypeptide: Cysteine--tRNA ligase (465 aa).

Cysteine 28 provides a ligand contact to Zn(2+). The 'HIGH' region motif lies at 30-40 (MTVYDYCHLGH). The Zn(2+) site is built by cysteine 209, histidine 234, and glutamate 238. Positions 266-270 (KMSKS) match the 'KMSKS' region motif. Lysine 269 provides a ligand contact to ATP.

It belongs to the class-I aminoacyl-tRNA synthetase family. As to quaternary structure, monomer. Zn(2+) serves as cofactor.

The protein resides in the cytoplasm. It catalyses the reaction tRNA(Cys) + L-cysteine + ATP = L-cysteinyl-tRNA(Cys) + AMP + diphosphate. The sequence is that of Cysteine--tRNA ligase from Nitrosomonas europaea (strain ATCC 19718 / CIP 103999 / KCTC 2705 / NBRC 14298).